Consider the following 402-residue polypeptide: Secreted RxLR effector protein 73 (402 aa).

The N-terminal stretch at 1–23 (MRLLHVVVATVSLTGAITSLIAA) is a signal peptide. N27 carries N-linked (GlcNAc...) asparagine glycosylation. Residues 104–107 (RVLR) carry the RxLR motif. Residues N111, N134, N143, N165, and N286 are each glycosylated (N-linked (GlcNAc...) asparagine).

The protein belongs to the RxLR effector family.

The protein localises to the secreted. The protein resides in the host cell. In terms of biological role, secreted effector that completely suppresses the host cell death induced by cell death-inducing proteins. This Plasmopara viticola (Downy mildew of grapevine) protein is Secreted RxLR effector protein 73.